The following is a 105-amino-acid chain: Large ribosomal subunit protein bL21 (105 aa).

This sequence belongs to the bacterial ribosomal protein bL21 family. In terms of assembly, part of the 50S ribosomal subunit. Contacts protein L20.

Functionally, this protein binds to 23S rRNA in the presence of protein L20. The chain is Large ribosomal subunit protein bL21 from Rickettsia prowazekii (strain Madrid E).